An 845-amino-acid chain; its full sequence is Protein P (845 aa).

Positions 1-179 (MPLSYQHFLK…FCGSPYSWEQ (179 aa)) are terminal protein domain (TP). Positions 180-348 (ELHHGRLVTK…YCLSHLVNLL (169 aa)) are spacer. Disordered stretches follow at residues 188 to 211 (TKTS…SRSS) and 288 to 317 (YSHL…ARSQ). Composition is skewed to polar residues over residues 199–211 (VCSQ…SRSS) and 290–301 (HLSTSKRQSSSG). The interval 349–692 (EDWGPCTDHG…YMNLYPVARQ (344 aa)) is polymerase/reverse transcriptase domain (RT). Positions 359–602 (EHHIRIPRTP…YSLNFMGYII (244 aa)) constitute a Reverse transcriptase domain. Asp431, Asp553, and Asp554 together coordinate Mg(2+).

Belongs to the hepadnaviridae P protein family.

It catalyses the reaction DNA(n) + a 2'-deoxyribonucleoside 5'-triphosphate = DNA(n+1) + diphosphate. The enzyme catalyses Endonucleolytic cleavage to 5'-phosphomonoester.. Activated by host HSP70 and HSP40 in vitro to be able to bind the epsilon loop of the pgRNA. Because deletion of the RNase H region renders the protein partly chaperone-independent, the chaperones may be needed indirectly to relieve occlusion of the RNA-binding site by this domain. Inhibited by several reverse-transcriptase inhibitors: Lamivudine, Adefovir and Entecavir. Multifunctional enzyme that converts the viral RNA genome into dsDNA in viral cytoplasmic capsids. This enzyme displays a DNA polymerase activity that can copy either DNA or RNA templates, and a ribonuclease H (RNase H) activity that cleaves the RNA strand of RNA-DNA heteroduplexes in a partially processive 3'- to 5'-endonucleasic mode. Neo-synthesized pregenomic RNA (pgRNA) are encapsidated together with the P protein, and reverse-transcribed inside the nucleocapsid. Initiation of reverse-transcription occurs first by binding the epsilon loop on the pgRNA genome, and is initiated by protein priming, thereby the 5'-end of (-)DNA is covalently linked to P protein. Partial (+)DNA is synthesized from the (-)DNA template and generates the relaxed circular DNA (RC-DNA) genome. After budding and infection, the RC-DNA migrates in the nucleus, and is converted into a plasmid-like covalently closed circular DNA (cccDNA). The activity of P protein does not seem to be necessary for cccDNA generation, and is presumably released from (+)DNA by host nuclear DNA repair machinery. This Homo sapiens (Human) protein is Protein P.